Consider the following 77-residue polypeptide: Small ribosomal subunit protein bS18 (77 aa).

It belongs to the bacterial ribosomal protein bS18 family. In terms of assembly, part of the 30S ribosomal subunit. Forms a tight heterodimer with protein bS6.

In terms of biological role, binds as a heterodimer with protein bS6 to the central domain of the 16S rRNA, where it helps stabilize the platform of the 30S subunit. The protein is Small ribosomal subunit protein bS18 of Bacillus thuringiensis subsp. konkukian (strain 97-27).